Here is a 278-residue protein sequence, read N- to C-terminus: 3-methyl-2-oxobutanoate hydroxymethyltransferase (278 aa).

D52 and D91 together coordinate Mg(2+). 3-methyl-2-oxobutanoate contacts are provided by residues 52 to 53 (DS), D91, and K121. Position 123 (E123) interacts with Mg(2+). The Proton acceptor role is filled by E190.

This sequence belongs to the PanB family. As to quaternary structure, homodecamer; pentamer of dimers. The cofactor is Mg(2+).

Its subcellular location is the cytoplasm. It carries out the reaction 3-methyl-2-oxobutanoate + (6R)-5,10-methylene-5,6,7,8-tetrahydrofolate + H2O = 2-dehydropantoate + (6S)-5,6,7,8-tetrahydrofolate. Its pathway is cofactor biosynthesis; (R)-pantothenate biosynthesis; (R)-pantoate from 3-methyl-2-oxobutanoate: step 1/2. Its function is as follows. Catalyzes the reversible reaction in which hydroxymethyl group from 5,10-methylenetetrahydrofolate is transferred onto alpha-ketoisovalerate to form ketopantoate. This is 3-methyl-2-oxobutanoate hydroxymethyltransferase from Rhodospirillum rubrum (strain ATCC 11170 / ATH 1.1.1 / DSM 467 / LMG 4362 / NCIMB 8255 / S1).